The primary structure comprises 883 residues: Lethal(3)malignant brain tumor-like protein 3 (883 aa).

An interaction with RBPJ. Required for transcription repressor activity on Notch target genes region spans residues 1-64; the sequence is MTESASSTSG…VKKATATTTW (64 aa). A compositionally biased stretch (basic and acidic residues) spans 146 to 156; sequence HAKDKDQKDER. The segment at 146 to 223 is disordered; sequence HAKDKDQKDE…RGDSAVLKQG (78 aa). Acidic residues-rich tracts occupy residues 157–166 and 185–194; these read DGGEDNDEED and DDGEERDDEM. MBT repeat units follow at residues 232-332, 340-439, and 448-543; these read WCWA…LRPP, FNWQ…LITP, and FSWD…LQAP. The CCHHC-type; degenerate zinc finger occupies 549-593; sequence LMEPSETGGCPTLGCRGVGHFKKSRYLGTQSGANCPYSEINLSKE. The disordered stretch occupies residues 595-768; the sequence is IFPDRLSGDT…TQQQAQTQQQ (174 aa). The span at 616–662 shows a compositional bias: basic and acidic residues; that stretch reads KRMDTRESSSSPETREKHANNFKEDSEKKKENEVKTSAEAKVVREEP. A Glycyl lysine isopeptide (Lys-Gly) (interchain with G-Cter in SUMO2) cross-link involves residue Lys638. 2 stretches are compositionally biased toward low complexity: residues 663-742 and 749-768; these read TPSV…QQPQ and QPQQ…TQQQ. The SAM domain occupies 811 to 875; that stretch reads WSTDEVSEFI…FNSILMFKAA (65 aa).

In terms of assembly, interacts with RNF2. Interacts (via SAM domain) with SAMD1 (via SAM domain); the interaction mediates L3MBTL3 binding to chromatin. Interacts with RBPJ; the interaction is required for L3MBTL3 localization to chromatin and is impaired the Notch-derived peptides containing the intracellular domain (NICD). Interacts (via SAM domain) with KDM1A. Interacts with DCAF5. Interacts with DNMT1. Interacts with E2F1. Interacts with SOX2. Interacts with SFMBT1. As to expression, detected in hematopoietic progenitor cells in fetal liver. Detected in adult bone marrow, heart, brain, spleen, lung, liver, kidney and testis.

It is found in the nucleus. Its function is as follows. Is a negative regulator of Notch target genes expression, required for RBPJ-mediated transcriptional repression. It recruits KDM1A to Notch-responsive elements and promotes KDM1A-mediated H3K4me demethylation. Involved in the regulation of ubiquitin-dependent degradation of a set of methylated non-histone proteins, including SOX2. It acts as an adapter recruiting the CRL4-DCAF5 E3 ubiquitin ligase complex to methylated target proteins. Also involved in the regulation of ubiquitin-dependent degradation of methylated DNMT1 and E2F1. Required for normal maturation of myeloid progenitor cells. This is Lethal(3)malignant brain tumor-like protein 3 from Mus musculus (Mouse).